The chain runs to 404 residues: Cysteine desulfurase IscS (404 aa).

Residues 75 to 76, Asn155, Gln183, and 203 to 205 each bind pyridoxal 5'-phosphate; these read AT and SAH. N6-(pyridoxal phosphate)lysine is present on Lys206. Thr243 serves as a coordination point for pyridoxal 5'-phosphate. Catalysis depends on Cys328, which acts as the Cysteine persulfide intermediate. Cys328 is a binding site for [2Fe-2S] cluster.

This sequence belongs to the class-V pyridoxal-phosphate-dependent aminotransferase family. NifS/IscS subfamily. Homodimer. Forms a heterotetramer with IscU, interacts with other sulfur acceptors. It depends on pyridoxal 5'-phosphate as a cofactor.

It is found in the cytoplasm. The enzyme catalyses (sulfur carrier)-H + L-cysteine = (sulfur carrier)-SH + L-alanine. It functions in the pathway cofactor biosynthesis; iron-sulfur cluster biosynthesis. In terms of biological role, master enzyme that delivers sulfur to a number of partners involved in Fe-S cluster assembly, tRNA modification or cofactor biosynthesis. Catalyzes the removal of elemental sulfur atoms from cysteine to produce alanine. Functions as a sulfur delivery protein for Fe-S cluster synthesis onto IscU, an Fe-S scaffold assembly protein, as well as other S acceptor proteins. The chain is Cysteine desulfurase IscS from Aeromonas hydrophila subsp. hydrophila (strain ATCC 7966 / DSM 30187 / BCRC 13018 / CCUG 14551 / JCM 1027 / KCTC 2358 / NCIMB 9240 / NCTC 8049).